Reading from the N-terminus, the 302-residue chain is m7GpppN-mRNA hydrolase NUDT17 (302 aa).

Residues 89-237 (GRGVDLGVAV…DGTETPKHLP (149 aa)) enclose the Nudix hydrolase domain. The Nudix box motif lies at 128-149 (GHVEPDEELLDGGLRELWEESG). Positions 143 and 147 each coordinate Mg(2+).

This sequence belongs to the Nudix hydrolase family. Mg(2+) is required as a cofactor. It depends on Mn(2+) as a cofactor.

It carries out the reaction a 5'-end (N(7)-methyl 5'-triphosphoguanosine)-ribonucleoside in mRNA + H2O = N(7)-methyl-GDP + a 5'-end phospho-ribonucleoside in mRNA + 2 H(+). In terms of biological role, acts as a decapping enzyme capable of hydrolyzing monomethylated capped RNAs (in vitro). Hydrolyzes monomethylated capped RNA after alpha and beta phosphates to form N(7)-methyl-GDP. Shows low activity towards unmethylated capped RNA. The sequence is that of m7GpppN-mRNA hydrolase NUDT17 (NUDT17) from Bos taurus (Bovine).